The primary structure comprises 262 residues: Small ribosomal subunit protein uS2 (262 aa).

A disordered region spans residues 240–262 (NLDEKEESQEAESTEENTTVESN). The segment covering 243–254 (EKEESQEAESTE) has biased composition (acidic residues).

It belongs to the universal ribosomal protein uS2 family.

The chain is Small ribosomal subunit protein uS2 from Staphylococcus haemolyticus (strain JCSC1435).